The sequence spans 374 residues: Methionine import ATP-binding protein MetN 2 (374 aa).

The region spanning 32–271 is the ABC transporter domain; that stretch reads VRFVGLGKTY…PQHEVSQTLL (240 aa). 68 to 75 lines the ATP pocket; it reads GRSGAGKS.

This sequence belongs to the ABC transporter superfamily. Methionine importer (TC 3.A.1.24) family. As to quaternary structure, the complex is composed of two ATP-binding proteins (MetN), two transmembrane proteins (MetI) and a solute-binding protein (MetQ).

It is found in the cell inner membrane. It carries out the reaction L-methionine(out) + ATP + H2O = L-methionine(in) + ADP + phosphate + H(+). It catalyses the reaction D-methionine(out) + ATP + H2O = D-methionine(in) + ADP + phosphate + H(+). In terms of biological role, part of the ABC transporter complex MetNIQ involved in methionine import. Responsible for energy coupling to the transport system. The polypeptide is Methionine import ATP-binding protein MetN 2 (Pseudomonas fluorescens (strain Pf0-1)).